Consider the following 280-residue polypeptide: uncharacterized protein (280 aa).

The next 3 helical transmembrane spans lie at 15–35, 68–88, and 94–114; these read IVDI…INRL, IGFI…ILAG, and IVIG…VFLI.

This sequence belongs to the MscS (TC 1.A.23) family.

Its subcellular location is the cell membrane. Functionally, may play a role in resistance to osmotic downshock. This is an uncharacterized protein from Bacillus subtilis (strain 168).